Consider the following 212-residue polypeptide: Acyl-homoserine-lactone synthase (212 aa).

This sequence belongs to the autoinducer synthase family.

The catalysed reaction is a fatty acyl-[ACP] + S-adenosyl-L-methionine = an N-acyl-L-homoserine lactone + S-methyl-5'-thioadenosine + holo-[ACP] + H(+). Functionally, required for the synthesis of OHHL (N-(3-oxohexanoyl)-L-homoserine lactone), an autoinducer molecule which binds to TraR and thus acts in the control of conjugal transfer. In Rhizobium radiobacter (Agrobacterium tumefaciens), this protein is Acyl-homoserine-lactone synthase (traI).